The chain runs to 208 residues: FMN-dependent NADH:quinone oxidoreductase 2 (208 aa).

This sequence belongs to the azoreductase type 1 family. Homodimer. Requires FMN as cofactor.

It catalyses the reaction 2 a quinone + NADH + H(+) = 2 a 1,4-benzosemiquinone + NAD(+). The enzyme catalyses N,N-dimethyl-1,4-phenylenediamine + anthranilate + 2 NAD(+) = 2-(4-dimethylaminophenyl)diazenylbenzoate + 2 NADH + 2 H(+). In terms of biological role, quinone reductase that provides resistance to thiol-specific stress caused by electrophilic quinones. Its function is as follows. Also exhibits azoreductase activity. Catalyzes the reductive cleavage of the azo bond in aromatic azo compounds to the corresponding amines. The polypeptide is FMN-dependent NADH:quinone oxidoreductase 2 (Bacillus anthracis).